Consider the following 187-residue polypeptide: Large ribosomal subunit protein uL5 (187 aa).

It belongs to the universal ribosomal protein uL5 family. In terms of assembly, part of the 50S ribosomal subunit; part of the 5S rRNA/L5/L18/L25 subcomplex. Contacts the 5S rRNA and the P site tRNA. Forms a bridge to the 30S subunit in the 70S ribosome.

This is one of the proteins that bind and probably mediate the attachment of the 5S RNA into the large ribosomal subunit, where it forms part of the central protuberance. In the 70S ribosome it contacts protein S13 of the 30S subunit (bridge B1b), connecting the 2 subunits; this bridge is implicated in subunit movement. Contacts the P site tRNA; the 5S rRNA and some of its associated proteins might help stabilize positioning of ribosome-bound tRNAs. In Brachyspira hyodysenteriae (strain ATCC 49526 / WA1), this protein is Large ribosomal subunit protein uL5.